A 324-amino-acid chain; its full sequence is Calmodulin-like protein 12 (324 aa).

6 EF-hand domains span residues 8 to 43 (DQIT…IGEK), 44 to 79 (PTKA…NQGH), 97 to 132 (DQIT…LGKN), 133 to 168 (RTKA…NQGH), 187 to 222 (DQIL…LGET), and 223 to 258 (QTKA…KMID). The Ca(2+) site is built by D21, N23, D25, S27, E32, D57, D59, D61, T63, E68, D110, N112, D114, S116, E121, D146, D148, D150, T152, E157, D200, N202, D204, Y206, E211, D236, D238, D240, T242, and E247.

The protein belongs to the calmodulin family. In terms of assembly, interacts with PID. Binds to ABCG36.

Its function is as follows. Potential calcium sensor that binds calcium in vitro. The chain is Calmodulin-like protein 12 from Arabidopsis thaliana (Mouse-ear cress).